A 360-amino-acid chain; its full sequence is MSTVICMKQREEEFLLTIRPFANRMQKSPCYIPIVSSATLWDRSTPSAKHIPCYERTSVPCSRFINHMKNFSESPKFRSLHFLNFPVFPERTQNSMACKRLLHTCQYIVPRCSVSTVSFDEESYEEFRSSPAPSSETDEAPLIFTARGETEERARGAPKQAWNSSFLEQLVKKPNWAHSVNPVHLEAQGIHISRHTRPKGQPLSSPKKNSGSAARPSTAIGLCRRSQTPGALQSTGPSNTELEPEERMAVPAGAQAHPDDIQSRLLGASGNPVGKGAVAMAPEMLPKHPHTPRDRRPQADTSLHGNLAGAPLPLLAGASTHFPSKRLIKVCSSAPPRPTRRFHTVCSQALSRPVVNAHLH.

Residues 193 to 245 (SRHTRPKGQPLSSPKKNSGSAARPSTAIGLCRRSQTPGALQSTGPSNTELEPE) are disordered. Composition is skewed to polar residues over residues 202–212 (PLSSPKKNSGS) and 225–241 (RSQTPGALQSTGPSNTE).

This is an uncharacterized protein from Homo sapiens (Human).